Consider the following 795-residue polypeptide: MKFSESWLREWVNPAVSREALSHQITMAGLEVDGVDAVAAEFNGVVIGEVVECGLHPDADKLRVTKVSVGSSELIDIVCGAPNCRQGLKVAVAMVGAVLPGDFKIKKAKLRGMPSEGMLCSYSELGIDIDSDGIIELPLDAPLGTDLREYLKLDDAVIEVDLTANRADCLGMVGLAREVGVLNRQAVTEPQWQAVTPTTDAKVTINVKESAACPRYLGRVVKNVNVKAATPLWMQEKLRRSGIRSIDPIVDITNFVLVEFGQPMHAFDLAKLTGDIQVRLGNGEEKITLLDGSEVTIPSDTLVIADDARPLALAGVFGGEYSGVSDTTQDILLECAFFAPLAIMGKSRRLGLHTDSSHRFERGVDPEMQHKVIDRATRLVLDICGGEAGPVVEAKSDADLPKPAQILLRRSKLDKILGHYVPDSDVVEILERLGFSVVKGEGCWQVITATYRFDMAIEEDLIEEVARIYGYNNIPNVAPIASLRMSDHKETDLSLKRVRSLLVARGFQEAVTYSFVDPKLQNLVHPGEQAMVLPNPISSEMSAMRLSMFTGLLTAVGYNQSRQQGRVRLFETGLRFVPDINAESGVRQQAMLGCVITGPQNDEHWAMESKTVDFFDLKGDLEAIIGLTVSASEFSFRVATHSALHPGQCAEILRNDRVIGHIGAIHPSLEKPFGLNGKTIVFELELDALLHTSLPLAQAVSKFPANRRDIAVVVDESVSAGDVMKLIRKVGENQLVGINLFDVYLGKGVEPGKKSLAIALTLQDTTRTLEEKEIAETVESVVSALKTEFNASLRD.

A tRNA-binding domain is found at 39–148 (AAEFNGVVIG…LDAPLGTDLR (110 aa)). In terms of domain architecture, B5 spans 401–476 (PKPAQILLRR…RIYGYNNIPN (76 aa)). 4 residues coordinate Mg(2+): Asp454, Asp460, Glu463, and Glu464. Residues 701 to 794 (SKFPANRRDI…LKTEFNASLR (94 aa)) form the FDX-ACB domain.

The protein belongs to the phenylalanyl-tRNA synthetase beta subunit family. Type 1 subfamily. In terms of assembly, tetramer of two alpha and two beta subunits. The cofactor is Mg(2+).

Its subcellular location is the cytoplasm. The enzyme catalyses tRNA(Phe) + L-phenylalanine + ATP = L-phenylalanyl-tRNA(Phe) + AMP + diphosphate + H(+). The chain is Phenylalanine--tRNA ligase beta subunit from Shewanella oneidensis (strain ATCC 700550 / JCM 31522 / CIP 106686 / LMG 19005 / NCIMB 14063 / MR-1).